Reading from the N-terminus, the 701-residue chain is Polyribonucleotide nucleotidyltransferase (701 aa).

The Mg(2+) site is built by Asp487 and Asp493. Positions Pro554–Ile613 constitute a KH domain. Residues Gly623–Lys691 enclose the S1 motif domain.

The protein belongs to the polyribonucleotide nucleotidyltransferase family. As to quaternary structure, component of the RNA degradosome, which is a multiprotein complex involved in RNA processing and mRNA degradation. Requires Mg(2+) as cofactor.

It localises to the cytoplasm. The catalysed reaction is RNA(n+1) + phosphate = RNA(n) + a ribonucleoside 5'-diphosphate. Its function is as follows. Involved in mRNA degradation. Catalyzes the phosphorolysis of single-stranded polyribonucleotides processively in the 3'- to 5'-direction. This Pseudomonas putida (Arthrobacter siderocapsulatus) protein is Polyribonucleotide nucleotidyltransferase.